The primary structure comprises 795 residues: RalBP1-associated Eps domain-containing protein 1 (795 aa).

An EH 1 domain is found at 10–113 (EQKYYSDLFS…SKNEQESRLA (104 aa)). A disordered region spans residues 112–238 (LAASYSSDSE…NWVSFADTPP (127 aa)). Polar residues predominate over residues 115–126 (SYSSDSENQGSY). A phosphoserine mark is found at Ser-145, Ser-162, Ser-166, and Ser-170. A compositionally biased stretch (low complexity) spans 156 to 168 (EQQEPVSPVVSPQ). Position 173 is a phosphothreonine (Thr-173). Low complexity predominate over residues 205 to 216 (GDAQAGSSAGDA). Phosphoserine occurs at positions 272 and 273. Residues 285-374 (QRQYYVNQFK…ESLMPKLIDL (90 aa)) form the EH 2 domain. Tyr-288 is subject to Phosphotyrosine. At Ser-307 the chain carries Phosphoserine. The EF-hand domain occupies 318–353 (LPILELSHIWELSDFDKDGALTLDEFCAAFHLVVAR). Asp-331, Asp-333, Asp-335, and Glu-342 together coordinate Ca(2+). 2 disordered regions span residues 380–433 (VGEQ…SSQT) and 469–720 (ELKR…DEHT). The segment covering 407–433 (LNQTWPELNQSSEQWETFSERSSSSQT) has biased composition (polar residues). 3 positions are modified to phosphoserine: Ser-475, Ser-482, and Ser-489. Composition is skewed to polar residues over residues 497–518 (INSSVKFPSGNTVDGYSSSDSF) and 525–542 (IGSSVTRQRSHSGTSPDN). At Ser-539 the chain carries Phosphoserine. Thr-543 carries the post-translational modification Phosphothreonine. Pro residues predominate over residues 543-553 (TAPPPPPPRPQ). Phosphoserine is present on Ser-561. Residues 562–573 (LDMNRTFAVTTG) show a composition bias toward polar residues. A compositionally biased stretch (low complexity) spans 574 to 583 (QQQAGVVAHP). Residues 584 to 595 (PAVPPRPQPSQA) show a composition bias toward pro residues. Composition is skewed to polar residues over residues 611 to 622 (THTSTSPQQIPE) and 681 to 692 (ATNVPANVSKGT). Residues 651–795 (HPEVLPAEKA…LEQLRPFSHL (145 aa)) form an interaction with RALBP1 region. Positions 707-720 (KSEDELRPDVDEHT) are enriched in basic and acidic residues. A phosphoserine mark is found at Ser-708 and Ser-739. Residues 750-790 (SIRRNKETNTVLARLNSELQQQLKDVLEERISLEVQLEQLR) are a coiled coil.

In terms of assembly, homodimer (Potential). Interacts with RALBP1, CRK and GRB2. Binding to RALBP1 does not affect its Ral-binding activity. Forms a complex with the SH3 domains of CRK and GRB2 which may link it to an EGF-responsive tyrosine kinase. Interacts with RAB11FIP2. Interacts with AMPH, ITSN1 (via SH3 domains) and SGIP1; may be involved in clathrin-mediated endocytosis. EGF stimulates phosphorylation on Tyr-residues. In terms of tissue distribution, expressed in all tissues examined. The highest level expression was found in the kidney and testis.

The protein resides in the membrane. Its subcellular location is the clathrin-coated pit. Its function is as follows. May coordinate the cellular actions of activated EGF receptors and Ral-GTPases. This is RalBP1-associated Eps domain-containing protein 1 (Reps1) from Mus musculus (Mouse).